A 581-amino-acid chain; its full sequence is Chaperonin GroEL 1 (581 aa).

ATP is bound by residues 29–32 (TIGP), 86–90 (DGTTT), G413, and D492. A disordered region spans residues 522–543 (PEPEPAAPGGPSGDPMGGMGGM). Residues 531 to 543 (GPSGDPMGGMGGM) show a composition bias toward gly residues.

The protein belongs to the chaperonin (HSP60) family. As to quaternary structure, forms a cylinder of 14 subunits composed of two heptameric rings stacked back-to-back. Interacts with the co-chaperonin GroES.

The protein resides in the cytoplasm. It carries out the reaction ATP + H2O + a folded polypeptide = ADP + phosphate + an unfolded polypeptide.. Its function is as follows. Together with its co-chaperonin GroES, plays an essential role in assisting protein folding. The GroEL-GroES system forms a nano-cage that allows encapsulation of the non-native substrate proteins and provides a physical environment optimized to promote and accelerate protein folding. The sequence is that of Chaperonin GroEL 1 from Prochlorococcus marinus (strain MIT 9215).